The following is a 286-amino-acid chain: MKKTIQRGLFTGALVLMTAMTAKPANAEVNYQALVDADVKAFQGFFRKEFPDVKLEDFGNGVYALDEDARKQWKEMEEFPPYELDVEAGKALFNKPFANGKSLASCFPNGGAVRGMYPYFDEKRKEVVTLEMAINECRVANGEKPYAWEKGDIARVSAYIASISRGQKVDVKVKSKAAYDAYMKGKKFFYAKRGQLNMSCSGCHMEYAGRHLRAEIISPALGHTTHFPVFRSKWGEIGTLHRRYAGCSNNIGAKPFAPQSEEYRDLEFFQTVMSNGLKYNGPASRK.

Residues 1 to 27 form the signal peptide; it reads MKKTIQRGLFTGALVLMTAMTAKPANA. Residues C106 and C137 are joined by a disulfide bond. A Cytochrome c domain is found at 180–286; sequence DAYMKGKKFF…LKYNGPASRK (107 aa). Heme is bound by residues C200 and H204. R243 lines the substrate pocket. C247 lines the heme pocket. C247 (cysteine persulfide intermediate) is an active-site residue.

The protein belongs to the SoxA family. Heterodimer of SoxA and SoxX. The SoxAX complex interacts with CT1020, SoxAX-binding protein SaxB (SoxK); this interaction seems to be between SoxA and CT1020 and stimulates catalytic activity of the SoxAX complex. Heme serves as cofactor. In terms of processing, cysteine persulfide at Cys-247.

The protein localises to the periplasm. It catalyses the reaction L-cysteinyl-[SoxY protein] + thiosulfate + 2 Fe(III)-[cytochrome c] = S-sulfosulfanyl-L-cysteinyl-[SoxY protein] + 2 Fe(II)-[cytochrome c] + 2 H(+). The catalysed reaction is S-sulfanyl-L-cysteinyl-[SoxY protein] + thiosulfate + 2 Fe(III)-[cytochrome c] = S-(2-sulfodisulfanyl)-L-cysteinyl-[SoxY protein] + 2 Fe(II)-[cytochrome c] + 2 H(+). Its function is as follows. C-type monoheme cytochrome, which is part of the SoxAX cytochrome complex involved in sulfur oxidation. The SoxAX complex catalyzes the formation of a heterodisulfide bond between the conserved cysteine residue on a sulfur carrier SoxYZ complex subunit SoxY and thiosulfate or other inorganic sulfur substrates. This leads to the liberation of two electrons, which may be transferred from the SoxAX complex to another cytochrome c and which then may be used for reductive CO(2) fixation. The polypeptide is L-cysteine S-thiosulfotransferase subunit SoxA (Chlorobaculum tepidum (strain ATCC 49652 / DSM 12025 / NBRC 103806 / TLS) (Chlorobium tepidum)).